The sequence spans 725 residues: FYVE, RhoGEF and PH domain-containing protein 3 (725 aa).

The segment at M1–Q151 is disordered. Positions E124 to S136 are enriched in acidic residues. Phosphoserine is present on S128. In terms of domain architecture, DH spans K157–A341. The region spanning E370–E469 is the PH 1 domain. Residues Q487–D532 form a disordered region. Residues T500–E512 are compositionally biased toward low complexity. Positions E521 to D532 are enriched in basic and acidic residues. An FYVE-type zinc finger spans residues D532 to P588. C538, C541, C555, C558, C563, C566, C580, and C583 together coordinate Zn(2+). One can recognise a PH 2 domain in the interval P604–H703. Positions H703–P725 are disordered.

The protein resides in the cytoplasm. It localises to the cytoskeleton. Functionally, promotes the formation of filopodia. May activate CDC42, a member of the Ras-like family of Rho- and Rac proteins, by exchanging bound GDP for free GTP. Plays a role in regulating the actin cytoskeleton and cell shape. This Homo sapiens (Human) protein is FYVE, RhoGEF and PH domain-containing protein 3 (FGD3).